A 381-amino-acid chain; its full sequence is Queuine tRNA-ribosyltransferase (381 aa).

The Proton acceptor role is filled by Asp96. Residues 96–100 (DSGGF), Asp150, Gln193, and Gly220 each bind substrate. Residues 251 to 257 (GVGAPDS) form an RNA binding region. The active-site Nucleophile is the Asp270. An RNA binding; important for wobble base 34 recognition region spans residues 275-279 (TRIAR). The Zn(2+) site is built by Cys308, Cys310, Cys313, and His339.

This sequence belongs to the queuine tRNA-ribosyltransferase family. As to quaternary structure, homodimer. Within each dimer, one monomer is responsible for RNA recognition and catalysis, while the other monomer binds to the replacement base PreQ1. It depends on Zn(2+) as a cofactor.

It carries out the reaction 7-aminomethyl-7-carbaguanine + guanosine(34) in tRNA = 7-aminomethyl-7-carbaguanosine(34) in tRNA + guanine. It participates in tRNA modification; tRNA-queuosine biosynthesis. In terms of biological role, catalyzes the base-exchange of a guanine (G) residue with the queuine precursor 7-aminomethyl-7-deazaguanine (PreQ1) at position 34 (anticodon wobble position) in tRNAs with GU(N) anticodons (tRNA-Asp, -Asn, -His and -Tyr). Catalysis occurs through a double-displacement mechanism. The nucleophile active site attacks the C1' of nucleotide 34 to detach the guanine base from the RNA, forming a covalent enzyme-RNA intermediate. The proton acceptor active site deprotonates the incoming PreQ1, allowing a nucleophilic attack on the C1' of the ribose to form the product. After dissociation, two additional enzymatic reactions on the tRNA convert PreQ1 to queuine (Q), resulting in the hypermodified nucleoside queuosine (7-(((4,5-cis-dihydroxy-2-cyclopenten-1-yl)amino)methyl)-7-deazaguanosine). This chain is Queuine tRNA-ribosyltransferase, found in Enterococcus faecalis (strain ATCC 700802 / V583).